The following is a 361-amino-acid chain: Peptide chain release factor 1 (361 aa).

Q237 carries the post-translational modification N5-methylglutamine. Positions D285–R296 are enriched in basic and acidic residues. Positions D285 to R305 are disordered.

The protein belongs to the prokaryotic/mitochondrial release factor family. Methylated by PrmC. Methylation increases the termination efficiency of RF1.

It is found in the cytoplasm. Its function is as follows. Peptide chain release factor 1 directs the termination of translation in response to the peptide chain termination codons UAG and UAA. This is Peptide chain release factor 1 from Shewanella sediminis (strain HAW-EB3).